The primary structure comprises 332 residues: MSGQHQITEQSSRNPLSRVSTLLPEKPLSPTSTYAGTQKHPEAPRQSSFLIQLQNIRNAIRKPMAEFFGVALLIIFGAGSACQVVLSTNPDVASSARGSFLSINFGWAIGIAMGVWVSGGISGGHINPAITIAMATYRGFPWRKVPSYILAQVLGGVVGAGLVYANYIHAIDIFEGGHHIRTQATASLFATYALPYMTQASCFFSEFLATAVLSMMVFALTDKRNHSPTNGLLPFALFILFVGLGASLGMETAYALNPARDFGPRLFLAMAGYGKALFNYRSQYWLWAPIIAPVLGAQAGGLLYDTFLNDGDNSPIKWRCASSQEHQLAEVV.

The segment covering 1 to 20 has biased composition (polar residues); sequence MSGQHQITEQSSRNPLSRVS. The segment at 1–45 is disordered; it reads MSGQHQITEQSSRNPLSRVSTLLPEKPLSPTSTYAGTQKHPEAPR. Topologically, residues 1–66 are cytoplasmic; it reads MSGQHQITEQ…RNAIRKPMAE (66 aa). A helical transmembrane segment spans residues 67–87; the sequence is FFGVALLIIFGAGSACQVVLS. The Extracellular portion of the chain corresponds to 88–100; sequence TNPDVASSARGSF. Residues 101-121 form a helical membrane-spanning segment; that stretch reads LSINFGWAIGIAMGVWVSGGI. The Cytoplasmic segment spans residues 122–144; the sequence is SGGHINPAITIAMATYRGFPWRK. An NPA 1 motif is present at residues 127-129; the sequence is NPA. The chain crosses the membrane as a helical span at residues 145–165; the sequence is VPSYILAQVLGGVVGAGLVYA. Topologically, residues 166 to 199 are extracellular; the sequence is NYIHAIDIFEGGHHIRTQATASLFATYALPYMTQ. A helical membrane pass occupies residues 200–220; it reads ASCFFSEFLATAVLSMMVFAL. Residues 221 to 230 are Cytoplasmic-facing; that stretch reads TDKRNHSPTN. The helical transmembrane segment at 231–251 threads the bilayer; it reads GLLPFALFILFVGLGASLGME. Topologically, residues 252 to 283 are extracellular; that stretch reads TAYALNPARDFGPRLFLAMAGYGKALFNYRSQ. The NPA 2 motif lies at 257–259; the sequence is NPA. The chain crosses the membrane as a helical span at residues 284 to 304; that stretch reads YWLWAPIIAPVLGAQAGGLLY. The Cytoplasmic portion of the chain corresponds to 305–332; it reads DTFLNDGDNSPIKWRCASSQEHQLAEVV.

Belongs to the MIP/aquaporin (TC 1.A.8) family.

It is found in the membrane. It catalyses the reaction H2O(in) = H2O(out). It carries out the reaction NH4(+)(in) = NH4(+)(out). Functionally, water channel required to facilitate the transport of water across membranes. Acts as the most efficient Laccaria water channel. In addition to water, also shows strong ammonium transport activity. May be involved in fungal nitrogen (ammonium) support of the plant host in symbiosis. The polypeptide is Aquaporin Lacbi1:317173 (Laccaria bicolor (strain S238N-H82 / ATCC MYA-4686) (Bicoloured deceiver)).